The chain runs to 384 residues: Dual-specificity RNA methyltransferase RlmN (384 aa).

Residue glutamate 93 is the Proton acceptor of the active site. Positions 99 to 339 (EETRGTLCVS…TTIRKTRGDD (241 aa)) constitute a Radical SAM core domain. Cysteine 106 and cysteine 344 are disulfide-bonded. 3 residues coordinate [4Fe-4S] cluster: cysteine 113, cysteine 117, and cysteine 120. Residues 170–171 (GE), serine 202, 224–226 (SLH), and asparagine 301 contribute to the S-adenosyl-L-methionine site. The S-methylcysteine intermediate role is filled by cysteine 344.

Belongs to the radical SAM superfamily. RlmN family. It depends on [4Fe-4S] cluster as a cofactor.

It localises to the cytoplasm. The catalysed reaction is adenosine(2503) in 23S rRNA + 2 reduced [2Fe-2S]-[ferredoxin] + 2 S-adenosyl-L-methionine = 2-methyladenosine(2503) in 23S rRNA + 5'-deoxyadenosine + L-methionine + 2 oxidized [2Fe-2S]-[ferredoxin] + S-adenosyl-L-homocysteine. It catalyses the reaction adenosine(37) in tRNA + 2 reduced [2Fe-2S]-[ferredoxin] + 2 S-adenosyl-L-methionine = 2-methyladenosine(37) in tRNA + 5'-deoxyadenosine + L-methionine + 2 oxidized [2Fe-2S]-[ferredoxin] + S-adenosyl-L-homocysteine. In terms of biological role, specifically methylates position 2 of adenine 2503 in 23S rRNA and position 2 of adenine 37 in tRNAs. m2A2503 modification seems to play a crucial role in the proofreading step occurring at the peptidyl transferase center and thus would serve to optimize ribosomal fidelity. In Cupriavidus necator (strain ATCC 17699 / DSM 428 / KCTC 22496 / NCIMB 10442 / H16 / Stanier 337) (Ralstonia eutropha), this protein is Dual-specificity RNA methyltransferase RlmN.